The primary structure comprises 224 residues: UPF0758 protein HEAR2468 (224 aa).

The MPN domain occupies 102-224 (ALNSPQAVKQ…VYSFAEQGQL (123 aa)). Residues His173, His175, and Asp186 each contribute to the Zn(2+) site. A JAMM motif motif is present at residues 173 to 186 (HNHPSGTPEPSAAD).

It belongs to the UPF0758 family.

The sequence is that of UPF0758 protein HEAR2468 from Herminiimonas arsenicoxydans.